The following is an 839-amino-acid chain: Autophagy-related protein 9A (839 aa).

Alanine 2 bears the N-acetylalanine mark. The Cytoplasmic portion of the chain corresponds to 2 to 61 (AQFDTEYQRLEASYSDSPPGEEDLLVHVAEGSKSPWHHIENLDLFFSRVYNLHQKNGFTC). The Tyrosine-based sorting signal signature appears at 8 to 11 (YQRL). Residues serine 14, serine 16, and serine 18 each carry the phosphoserine modification. Residues 62–84 (MLIGEIFELMQFLFVVAFTTFLV) traverse the membrane as a helical segment. The Lumenal portion of the chain corresponds to 85–128 (SCVDYDILFANKMVNHSLHPTEPVKVTLPDAFLPAQVCSARIQE). A glycan (N-linked (GlcNAc...) asparagine) is linked at asparagine 99. The chain crosses the membrane as a helical span at residues 129 to 154 (NGSLITILVIAGVFWIHRLIKFIYNI). At 155–290 (CCYWEIHSFY…ELAQRLSNRI (136 aa)) the chain is on the cytoplasmic side. Residues 291-301 (LWIGIANFLLC) lie within the membrane without spanning it. Over 302 to 319 (PLILIWQILYAFFSYAEV) the chain is Cytoplasmic. An intramembrane segment occupies 320–328 (LKREPGALG). Residues 329 to 371 (ARCWSLYGRCYLRHFNELEHELQSRLNRGYKPASKYMNCFLSP) lie on the Cytoplasmic side of the membrane. The chain crosses the membrane as a helical span at residues 372–397 (LLTLLAKNGAFFAGSILAVLIALTIY). At 398–406 (DEDVLAVEH) the chain is on the lumenal side. A helical transmembrane segment spans residues 407 to 424 (VLTTVTLLGVTVTVCRSF). The Cytoplasmic segment spans residues 425–470 (IPDQHMVFCPEQLLRVILAHIHYMPDHWQGNAHRSQTRDEFAQLFQ). The stretch at 471-480 (YKAVFILEEL) is an intramembrane region. At 481 to 483 (LSP) the chain is on the cytoplasmic side. Residues 484 to 492 (IVTPLILIF) lie within the membrane without spanning it. Residues 493–839 (CLRPRALEII…DELPPQVHKV (347 aa)) are Cytoplasmic-facing. Phosphoserine is present on residues serine 656, serine 735, serine 738, serine 741, and serine 828. Disordered stretches follow at residues 656-689 (SPLQ…SSVW) and 717-839 (HKQQ…VHKV). Positions 724–736 (EPERHVWHRRESD) are enriched in basic and acidic residues. 2 stretches are compositionally biased toward acidic residues: residues 737–747 (ESGESAPEEGG) and 823–832 (VPEEGSEDEL).

This sequence belongs to the ATG9 family. Homotrimer; forms a homotrimer with a central pore that forms a path between the two membrane leaflets. Interacts (via cytoplasmic its C-terminus) with ATG2A. Interacts with SUPT20H. Interacts (via the tyrosine-based sorting signal motif) with AP4M1; promoting association with the AP-4 complex. Interacts with ARFIP1 and ARFIP2. Interacts with PI4K2A and PI4KB. Interacts with ATG4A; the interaction is direct and promotes ATG9A trafficking. Post-translationally, ufmylated in a DDRGK1 dependent manner.

The protein localises to the preautophagosomal structure membrane. The protein resides in the cytoplasmic vesicle. Its subcellular location is the autophagosome membrane. It localises to the golgi apparatus. It is found in the trans-Golgi network membrane. The protein localises to the late endosome membrane. The protein resides in the recycling endosome membrane. Its subcellular location is the endoplasmic reticulum membrane. It localises to the mitochondrion membrane. It catalyses the reaction a 1,2-diacyl-sn-glycero-3-phosphocholine(in) = a 1,2-diacyl-sn-glycero-3-phosphocholine(out). The catalysed reaction is a 1,2-diacyl-sn-glycero-3-phospho-L-serine(in) = a 1,2-diacyl-sn-glycero-3-phospho-L-serine(out). The enzyme catalyses a 1,2-diacyl-sn-glycero-3-phosphoethanolamine(in) = a 1,2-diacyl-sn-glycero-3-phosphoethanolamine(out). Phospholipid scramblase involved in autophagy by mediating autophagosomal membrane expansion. Cycles between the preautophagosomal structure/phagophore assembly site (PAS) and the cytoplasmic vesicle pool and supplies membrane for the growing autophagosome. Lipid scramblase activity plays a key role in preautophagosomal structure/phagophore assembly by distributing the phospholipids that arrive through ATG2 (ATG2A or ATG2B) from the cytoplasmic to the luminal leaflet of the bilayer, thereby driving autophagosomal membrane expansion. Also required to supply phosphatidylinositol 4-phosphate to the autophagosome initiation site by recruiting the phosphatidylinositol 4-kinase beta (PI4KB) in a process dependent on ARFIP2, but not ARFIP1. In addition to autophagy, also plays a role in necrotic cell death. This Rattus norvegicus (Rat) protein is Autophagy-related protein 9A.